The primary structure comprises 148 residues: NHMESHKLTSKAEKAIECDECGKHFSHAGALFTHKMVHKEKGANKMHKCKFCEYETAEQGLLNRHLLAVHSKNFPHICVECGKGFRHPSELKKHMRIHTGEKPYQCQYCEYRSADSSNLKTHVKTKHSKEMPFKCDICLLTFSDTKEV.

C2H2-type zinc fingers lie at residues 16 to 38 (IECD…KMVH) and 76 to 98 (HICV…MRIH).

It belongs to the krueppel C2H2-type zinc-finger protein family. ZFX/ZFY subfamily.

It is found in the nucleus. Its function is as follows. Probable transcriptional activator. In Sus scrofa (Pig), this protein is Zinc finger X-chromosomal protein (ZFX).